Here is a 1154-residue protein sequence, read N- to C-terminus: Polyketide biosynthesis protein ThaF (1154 aa).

The segment at 330–714 is acyl transferase; it reads MHAFLFPGQG…TNGIAPAARV (385 aa). Residues 627-689 are disordered; the sequence is SAVAASAPPR…PAPAPAPAPA (63 aa). The segment covering 641–672 has biased composition (low complexity); that stretch reads ADAQPPAASPARAATAASTMPPASASASASAP. Positions 673–689 are enriched in pro residues; the sequence is APAPAPAPAPAPAPAPA.

The protein in the N-terminal section; belongs to the FabD family.

It localises to the cytoplasm. It carries out the reaction holo-[ACP] + malonyl-CoA = malonyl-[ACP] + CoA. It participates in antibiotic biosynthesis. Functionally, involved in production of the polyketide antibiotic thailandamide. Probably has an acyl transferase activity and could also have a flavin mononucleotide-dependent oxidoreductase activity. In Burkholderia thailandensis (strain ATCC 700388 / DSM 13276 / CCUG 48851 / CIP 106301 / E264), this protein is Polyketide biosynthesis protein ThaF.